The chain runs to 390 residues: Putative 8-amino-7-oxononanoate synthase (390 aa).

Residue Arg19 participates in substrate binding. 105–106 lines the pyridoxal 5'-phosphate pocket; that stretch reads GY. His130 contacts substrate. Pyridoxal 5'-phosphate contacts are provided by residues Ser177, 202–205, and 234–237; these read DEAH and TFSK. Lys237 bears the N6-(pyridoxal phosphate)lysine mark. Thr351 provides a ligand contact to substrate.

This sequence belongs to the class-II pyridoxal-phosphate-dependent aminotransferase family. BioF subfamily. As to quaternary structure, homodimer. Requires pyridoxal 5'-phosphate as cofactor.

It carries out the reaction 6-carboxyhexanoyl-[ACP] + L-alanine + H(+) = (8S)-8-amino-7-oxononanoate + holo-[ACP] + CO2. It functions in the pathway cofactor biosynthesis; biotin biosynthesis. Catalyzes the decarboxylative condensation of pimeloyl-[acyl-carrier protein] and L-alanine to produce 8-amino-7-oxononanoate (AON), [acyl-carrier protein], and carbon dioxide. The polypeptide is Putative 8-amino-7-oxononanoate synthase (bioF) (Geobacillus kaustophilus (strain HTA426)).